The sequence spans 95 residues: Co-chaperonin GroES (95 aa).

This sequence belongs to the GroES chaperonin family. Heptamer of 7 subunits arranged in a ring. Interacts with the chaperonin GroEL.

It is found in the cytoplasm. Its function is as follows. Together with the chaperonin GroEL, plays an essential role in assisting protein folding. The GroEL-GroES system forms a nano-cage that allows encapsulation of the non-native substrate proteins and provides a physical environment optimized to promote and accelerate protein folding. GroES binds to the apical surface of the GroEL ring, thereby capping the opening of the GroEL channel. The chain is Co-chaperonin GroES from Xylella fastidiosa (strain M23).